A 314-amino-acid chain; its full sequence is Acetyl-coenzyme A carboxylase carboxyl transferase subunit alpha (314 aa).

Residues 32 to 289 form the CoA carboxyltransferase C-terminal domain; sequence EIDMLEASLE…KSAFVAQLDS (258 aa).

It belongs to the AccA family. Acetyl-CoA carboxylase is a heterohexamer composed of biotin carboxyl carrier protein (AccB), biotin carboxylase (AccC) and two subunits each of ACCase subunit alpha (AccA) and ACCase subunit beta (AccD).

The protein resides in the cytoplasm. The enzyme catalyses N(6)-carboxybiotinyl-L-lysyl-[protein] + acetyl-CoA = N(6)-biotinyl-L-lysyl-[protein] + malonyl-CoA. It participates in lipid metabolism; malonyl-CoA biosynthesis; malonyl-CoA from acetyl-CoA: step 1/1. Its function is as follows. Component of the acetyl coenzyme A carboxylase (ACC) complex. First, biotin carboxylase catalyzes the carboxylation of biotin on its carrier protein (BCCP) and then the CO(2) group is transferred by the carboxyltransferase to acetyl-CoA to form malonyl-CoA. This is Acetyl-coenzyme A carboxylase carboxyl transferase subunit alpha from Staphylococcus aureus (strain NCTC 8325 / PS 47).